We begin with the raw amino-acid sequence, 106 residues long: Gibberellin-regulated protein 12 (106 aa).

An N-terminal signal peptide occupies residues 1–22 (MMKLIVVFVISSLLFATQFSNG).

The protein belongs to the GASA family. Six disulfide bonds may be present.

The protein resides in the secreted. Gibberellin-regulated protein that may function in hormonal controlled steps of development such as seed germination, flowering and seed maturation. This Arabidopsis thaliana (Mouse-ear cress) protein is Gibberellin-regulated protein 12 (GASA12).